We begin with the raw amino-acid sequence, 645 residues long: Threonine--tRNA ligase (645 aa).

The region spanning 3–64 (DMINITFPDG…EQDGTITIVT (62 aa)) is the TGS domain. Residues 247 to 544 (DHRKLGKELG…LLEEYKGAFP (298 aa)) are catalytic. Residues Cys-340, His-391, and His-521 each coordinate Zn(2+).

It belongs to the class-II aminoacyl-tRNA synthetase family. As to quaternary structure, homodimer. The cofactor is Zn(2+).

Its subcellular location is the cytoplasm. It catalyses the reaction tRNA(Thr) + L-threonine + ATP = L-threonyl-tRNA(Thr) + AMP + diphosphate + H(+). In terms of biological role, catalyzes the attachment of threonine to tRNA(Thr) in a two-step reaction: L-threonine is first activated by ATP to form Thr-AMP and then transferred to the acceptor end of tRNA(Thr). Also edits incorrectly charged L-seryl-tRNA(Thr). The polypeptide is Threonine--tRNA ligase (Halalkalibacterium halodurans (strain ATCC BAA-125 / DSM 18197 / FERM 7344 / JCM 9153 / C-125) (Bacillus halodurans)).